The following is a 177-amino-acid chain: Small ribosomal subunit protein uS5 (177 aa).

An S5 DRBM domain is found at 21–84; it reads LKEKMISVNR…DEARRGMIKI (64 aa).

Belongs to the universal ribosomal protein uS5 family. As to quaternary structure, part of the 30S ribosomal subunit. Contacts proteins S4 and S8.

With S4 and S12 plays an important role in translational accuracy. Its function is as follows. Located at the back of the 30S subunit body where it stabilizes the conformation of the head with respect to the body. The protein is Small ribosomal subunit protein uS5 of Nitrosomonas eutropha (strain DSM 101675 / C91 / Nm57).